A 461-amino-acid chain; its full sequence is Phosphoenolpyruvate carboxylase (461 aa).

This sequence belongs to the PEPCase type 2 family. Homotetramer. It depends on Mg(2+) as a cofactor.

It catalyses the reaction oxaloacetate + phosphate = phosphoenolpyruvate + hydrogencarbonate. Its function is as follows. Catalyzes the irreversible beta-carboxylation of phosphoenolpyruvate (PEP) to form oxaloacetate (OAA), a four-carbon dicarboxylic acid source for the tricarboxylic acid cycle. The chain is Phosphoenolpyruvate carboxylase from Pyrobaculum islandicum (strain DSM 4184 / JCM 9189 / GEO3).